The chain runs to 589 residues: Acyl-CoA ligase SID4 (589 aa).

The PTS2-type peroxisomal targeting signal signature appears at 12-20; the sequence is RLQQTLNHI. Residues 228–236, 367–372, D458, and R473 each bind ATP; these read TSGSTGNPK and SSYGLT. Substrate is bound at residue T372. Residues 481–483, K547, and 555–557 contribute to the CoA site; these read GGE and FGL. K572 is a binding site for ATP.

Belongs to the ATP-dependent AMP-binding enzyme family.

The protein localises to the peroxisome. It participates in siderophore biosynthesis. Functionally, acyl-CoA ligase; part of the gene cluster that mediates the biosynthesis of hydroxamate-containing siderophores that play a critical role in virulence via intracellular iron acquisition during macrophage infection. This is Acyl-CoA ligase SID4 from Ajellomyces capsulatus (Darling's disease fungus).